A 405-amino-acid chain; its full sequence is Adenosylhomocysteinase (405 aa).

Residues Asp113 and Glu138 each coordinate substrate. Position 139–141 (139–141 (TTT)) interacts with NAD(+). Lys168 and Asp172 together coordinate substrate. NAD(+) contacts are provided by residues Asn173, 202 to 207 (GYGWCG), Glu225, Asn260, 281 to 283 (AGH), and Asn327.

The protein belongs to the adenosylhomocysteinase family. It depends on NAD(+) as a cofactor.

Its subcellular location is the cytoplasm. It carries out the reaction S-adenosyl-L-homocysteine + H2O = L-homocysteine + adenosine. It functions in the pathway amino-acid biosynthesis; L-homocysteine biosynthesis; L-homocysteine from S-adenosyl-L-homocysteine: step 1/1. Functionally, may play a key role in the regulation of the intracellular concentration of adenosylhomocysteine. This is Adenosylhomocysteinase from Archaeoglobus fulgidus (strain ATCC 49558 / DSM 4304 / JCM 9628 / NBRC 100126 / VC-16).